A 356-amino-acid polypeptide reads, in one-letter code: Ferrochelatase (356 aa).

2 residues coordinate Fe cation: His214 and Glu295.

The protein belongs to the ferrochelatase family.

It is found in the cytoplasm. The enzyme catalyses heme b + 2 H(+) = protoporphyrin IX + Fe(2+). The protein operates within porphyrin-containing compound metabolism; protoheme biosynthesis; protoheme from protoporphyrin-IX: step 1/1. In terms of biological role, catalyzes the ferrous insertion into protoporphyrin IX. This Paraburkholderia phytofirmans (strain DSM 17436 / LMG 22146 / PsJN) (Burkholderia phytofirmans) protein is Ferrochelatase.